The following is a 247-amino-acid chain: 1-(5-phosphoribosyl)-5-[(5-phosphoribosylamino)methylideneamino] imidazole-4-carboxamide isomerase (247 aa).

Catalysis depends on Asp8, which acts as the Proton acceptor. Asp129 (proton donor) is an active-site residue.

The protein belongs to the HisA/HisF family.

It localises to the cytoplasm. It catalyses the reaction 1-(5-phospho-beta-D-ribosyl)-5-[(5-phospho-beta-D-ribosylamino)methylideneamino]imidazole-4-carboxamide = 5-[(5-phospho-1-deoxy-D-ribulos-1-ylimino)methylamino]-1-(5-phospho-beta-D-ribosyl)imidazole-4-carboxamide. Its pathway is amino-acid biosynthesis; L-histidine biosynthesis; L-histidine from 5-phospho-alpha-D-ribose 1-diphosphate: step 4/9. This is 1-(5-phosphoribosyl)-5-[(5-phosphoribosylamino)methylideneamino] imidazole-4-carboxamide isomerase from Rhodospirillum centenum (strain ATCC 51521 / SW).